Reading from the N-terminus, the 614-residue chain is NEDD8 ultimate buster 1 (614 aa).

Coiled coils occupy residues 36-71 and 151-206; these read LAVK…IERG and NVKA…MVVD. UBA domains follow at residues 373 to 413, 423 to 469, and 488 to 528; these read YIDP…ISNR, EEKE…LLSN, and SPSQ…LAHH. The Nuclear localization signal signature appears at 413–430; that stretch reads RREELAQIRKEEKEKRRR. The segment at 426–473 is NEDD8-binding 1; it reads EKRRRRLENVNTLRGMGYSTQAAKQALHQARGNLDDALKVLLSNPHMW. The interval 531–590 is disordered; it reads SLPPDLQFSGEDSSPTPSTSPSDSAGTSSASTDEDMETEAVNEILEDIPEHEEDYLDSTL. Low complexity predominate over residues 539 to 561; the sequence is SGEDSSPTPSTSPSDSAGTSSAS. Residues 549 to 597 form an NEDD8-binding 2 region; the sequence is TSPSDSAGTSSASTDEDMETEAVNEILEDIPEHEEDYLDSTLEDEEVII. The span at 562–590 shows a compositional bias: acidic residues; sequence TDEDMETEAVNEILEDIPEHEEDYLDSTL.

Directly interacts with NEDD8 and PSMD4/S5a, a member of the regulatory subunit of the 26S proteasome. Interacts with AIPL1. The interaction with UBD via UBA domains facilitates the linking of UBD-conjugated target protein to the proteasome complex and accelerates UBD degradation and that of its conjugates.

It is found in the nucleus. Specific down-regulator of the NEDD8 conjugation system. Recruits NEDD8, UBD, and their conjugates to the proteasome for degradation. In Mus musculus (Mouse), this protein is NEDD8 ultimate buster 1 (Nub1).